The sequence spans 293 residues: Homoserine kinase (293 aa).

Residue 84 to 94 (PLSRGLGSSSA) participates in ATP binding.

This sequence belongs to the GHMP kinase family. Homoserine kinase subfamily.

It localises to the cytoplasm. It catalyses the reaction L-homoserine + ATP = O-phospho-L-homoserine + ADP + H(+). Its pathway is amino-acid biosynthesis; L-threonine biosynthesis; L-threonine from L-aspartate: step 4/5. Its function is as follows. Catalyzes the ATP-dependent phosphorylation of L-homoserine to L-homoserine phosphate. This is Homoserine kinase from Nitratiruptor sp. (strain SB155-2).